The sequence spans 348 residues: S-adenosyl-L-methionine-dependent methyl transferase PigF (348 aa).

Position 199 (glutamate 199) interacts with S-adenosyl-L-methionine. Histidine 247 serves as the catalytic Proton acceptor.

The protein belongs to the class I-like SAM-binding methyltransferase superfamily. Cation-independent O-methyltransferase family.

It functions in the pathway antibiotic biosynthesis; prodigiosin biosynthesis. In terms of biological role, involved in the biosynthesis of 4-methoxy-2,2'-bipyrrole-5-carbaldehyde (MBC), one of the terminal products involved in the biosynthesis of the red antibiotic prodigiosin (Pig). Catalyzes the transfer of a methyl group from S-adenosyl-L-methionine (SAM) to the hydroxyl group of 4-hydroxy-2,2'-bipyrrole-5-carbaldehyde (HBC) to yield 4-methoxy-2,2'-bipyrrole-5-carbaldehyde (MBC). The chain is S-adenosyl-L-methionine-dependent methyl transferase PigF from Serratia sp. (strain ATCC 39006) (Prodigiosinella confusarubida).